Consider the following 274-residue polypeptide: 5'-3' exoribonuclease (274 aa).

Positions 8, 10, 15, 40, 65, 76, 190, 247, and 249 each coordinate Mn(2+).

Belongs to the PHP family. TrpH/YciV subfamily. Requires Mn(2+) as cofactor.

The enzyme catalyses a ribonucleoside 3',5'-bisphosphate + H2O = a ribonucleoside 5'-phosphate + phosphate. Its function is as follows. Efficiently catalyzes the hydrolysis of the 3'-phosphate from 3',5'-bis-phosphonucleotides as well as the successive hydrolysis of 5'-phosphomononucleotides from the 5'-end of short pieces of RNA and DNA, with no specificity toward the identity of the nucleotide base. Is more efficient at hydrolyzing RNA oligonucleotides than DNA oligonucleotides. This enzyme can also hydrolyze annealed DNA duplexes, albeit at a catalytic efficiency lower than that of the corresponding single-stranded oligonucleotides. The chain is 5'-3' exoribonuclease from Haemophilus influenzae (strain ATCC 51907 / DSM 11121 / KW20 / Rd).